The primary structure comprises 492 residues: Protein nucleotidyltransferase YdiU (492 aa).

Residues glycine 88, glycine 90, arginine 91, lysine 111, aspartate 123, glycine 124, arginine 174, and arginine 181 each contribute to the ATP site. The active-site Proton acceptor is the aspartate 250. Residues asparagine 251 and aspartate 260 each contribute to the Mg(2+) site. ATP is bound at residue aspartate 260.

The protein belongs to the SELO family. Mg(2+) is required as a cofactor. Requires Mn(2+) as cofactor.

It catalyses the reaction L-seryl-[protein] + ATP = 3-O-(5'-adenylyl)-L-seryl-[protein] + diphosphate. It carries out the reaction L-threonyl-[protein] + ATP = 3-O-(5'-adenylyl)-L-threonyl-[protein] + diphosphate. The catalysed reaction is L-tyrosyl-[protein] + ATP = O-(5'-adenylyl)-L-tyrosyl-[protein] + diphosphate. The enzyme catalyses L-histidyl-[protein] + UTP = N(tele)-(5'-uridylyl)-L-histidyl-[protein] + diphosphate. It catalyses the reaction L-seryl-[protein] + UTP = O-(5'-uridylyl)-L-seryl-[protein] + diphosphate. It carries out the reaction L-tyrosyl-[protein] + UTP = O-(5'-uridylyl)-L-tyrosyl-[protein] + diphosphate. Its function is as follows. Nucleotidyltransferase involved in the post-translational modification of proteins. It can catalyze the addition of adenosine monophosphate (AMP) or uridine monophosphate (UMP) to a protein, resulting in modifications known as AMPylation and UMPylation. The polypeptide is Protein nucleotidyltransferase YdiU (Rhodopseudomonas palustris (strain ATCC BAA-98 / CGA009)).